An 827-amino-acid chain; its full sequence is Discs large homolog 1-like protein (827 aa).

2 disordered regions span residues 38–61 and 102–133; these read HQDE…TPGP and SPVV…ANPP. Positions 44 to 56 are enriched in polar residues; sequence GSPQEPSSPQFTD. PDZ domains are found at residues 159–246, 254–341, and 403–484; these read EITL…RRRK, EIKL…AKPN, and KVVL…QYRP. The SH3 domain occupies 518 to 588; the sequence is KRSLYVRALF…PSKRRVEKKE (71 aa). A disordered region spans residues 595–618; sequence VKFNSKSREKGDNPDDMLSKGQSG. Residues 637–812 form the Guanylate kinase-like domain; that stretch reads SRPVIILGPM…IYDQVKQIIE (176 aa).

It belongs to the MAGUK family.

Its subcellular location is the membrane. Its function is as follows. May play a role in synapse assembly and function. In Danio rerio (Zebrafish), this protein is Discs large homolog 1-like protein (dlg1l).